Here is a 343-residue protein sequence, read N- to C-terminus: L-threonine 3-dehydrogenase (343 aa).

Residue C40 participates in Zn(2+) binding. Catalysis depends on charge relay system residues T42 and H45. 6 residues coordinate Zn(2+): H65, E66, C95, C98, C101, and C109. NAD(+) is bound by residues I177, D197, R202, 264-266, and 288-289; these read LGI and IY.

Belongs to the zinc-containing alcohol dehydrogenase family. As to quaternary structure, homotetramer. The cofactor is Zn(2+).

It localises to the cytoplasm. It catalyses the reaction L-threonine + NAD(+) = (2S)-2-amino-3-oxobutanoate + NADH + H(+). It participates in amino-acid degradation; L-threonine degradation via oxydo-reductase pathway; glycine from L-threonine: step 1/2. Catalyzes the NAD(+)-dependent oxidation of L-threonine to 2-amino-3-ketobutyrate. The chain is L-threonine 3-dehydrogenase from Vibrio parahaemolyticus serotype O3:K6 (strain RIMD 2210633).